The following is a 148-amino-acid chain: Small ribosomal subunit protein eS19 (148 aa).

Belongs to the eukaryotic ribosomal protein eS19 family. In terms of assembly, part of the 30S ribosomal subunit.

Functionally, may be involved in maturation of the 30S ribosomal subunit. The polypeptide is Small ribosomal subunit protein eS19 (Methanocaldococcus jannaschii (strain ATCC 43067 / DSM 2661 / JAL-1 / JCM 10045 / NBRC 100440) (Methanococcus jannaschii)).